The primary structure comprises 237 residues: Purine nucleoside phosphorylase DeoD-type (237 aa).

His-4 serves as a coordination point for a purine D-ribonucleoside. Phosphate contacts are provided by residues Gly-20, Arg-24, Arg-43, and 87-90; that span reads RVGT. Residues 179–181 and 203–204 contribute to the a purine D-ribonucleoside site; these read EME and SD. Catalysis depends on Asp-204, which acts as the Proton donor.

It belongs to the PNP/UDP phosphorylase family. Homohexamer; trimer of homodimers.

It carries out the reaction a purine D-ribonucleoside + phosphate = a purine nucleobase + alpha-D-ribose 1-phosphate. The catalysed reaction is a purine 2'-deoxy-D-ribonucleoside + phosphate = a purine nucleobase + 2-deoxy-alpha-D-ribose 1-phosphate. Functionally, catalyzes the reversible phosphorolytic breakdown of the N-glycosidic bond in the beta-(deoxy)ribonucleoside molecules, with the formation of the corresponding free purine bases and pentose-1-phosphate. In Streptococcus pyogenes serotype M5 (strain Manfredo), this protein is Purine nucleoside phosphorylase DeoD-type.